We begin with the raw amino-acid sequence, 459 residues long: GTPase Der (459 aa).

2 consecutive EngA-type G domains span residues 3–169 (PLVA…PPKE) and 183–358 (IRLA…DQFR). GTP is bound by residues 9–16 (GRPNVGKS), 56–60 (DTGGF), 119–122 (NKLD), 189–196 (GRPNVGKS), 236–240 (DTAGI), and 301–304 (NKWD). One can recognise a KH-like domain in the interval 359–442 (FRAPTPQLNR…PIRLIFKGRP (84 aa)).

Belongs to the TRAFAC class TrmE-Era-EngA-EngB-Septin-like GTPase superfamily. EngA (Der) GTPase family. Associates with the 50S ribosomal subunit.

Functionally, GTPase that plays an essential role in the late steps of ribosome biogenesis. The polypeptide is GTPase Der (Myxococcus xanthus (strain DK1622)).